The chain runs to 349 residues: Protein RecA (349 aa).

65 to 72 (GPESSGKT) serves as a coordination point for ATP. The tract at residues 329 to 349 (FDGDVDENENEDDSPKTLFDE) is disordered. The segment covering 331 to 340 (GDVDENENED) has biased composition (acidic residues).

It belongs to the RecA family.

The protein resides in the cytoplasm. Can catalyze the hydrolysis of ATP in the presence of single-stranded DNA, the ATP-dependent uptake of single-stranded DNA by duplex DNA, and the ATP-dependent hybridization of homologous single-stranded DNAs. It interacts with LexA causing its activation and leading to its autocatalytic cleavage. This chain is Protein RecA, found in Staphylococcus epidermidis (strain ATCC 35984 / DSM 28319 / BCRC 17069 / CCUG 31568 / BM 3577 / RP62A).